The sequence spans 284 residues: Anaerobic dimethyl sulfoxide reductase chain YnfH (284 aa).

Over 1–9 (MGNGWHEWP) the chain is Periplasmic. Residues 10 to 30 (LVIFTVLGQCVVGALIVSGIG) form a helical membrane-spanning segment. Topologically, residues 31–45 (WFAAKNDADRQRIVR) are cytoplasmic. The helical transmembrane segment at 46–66 (GMFFLWLLMGVGFIASVMHLG) threads the bilayer. Residues 67 to 86 (SPLRAFNSLNRIGASGLSNE) lie on the Periplasmic side of the membrane. A helical membrane pass occupies residues 87-107 (IAAGSIFFAVGGLWWLVAVIG). At 108–115 (KMPQALGK) the chain is on the cytoplasmic side. Residues 116–136 (LWLLFSMALGVIFVWMMTCVY) traverse the membrane as a helical segment. Residues 137 to 148 (QIDTVPTWHNGY) are Periplasmic-facing. Residues 149 to 169 (TTLAFFLTVLLSGPILAAAIL) traverse the membrane as a helical segment. The Cytoplasmic portion of the chain corresponds to 170–180 (RAARVTFNTTP). A helical membrane pass occupies residues 181–201 (FAIISVLALIACAGVIVLQGL). Topologically, residues 202-222 (SLASIHSSVQQASALVPDYAS) are periplasmic. Residues 223 to 243 (LQVWRVVLLCAGLGCWLCPLI) form a helical membrane-spanning segment. The Cytoplasmic portion of the chain corresponds to 244–250 (RRREPHV). Residues 251 to 271 (AGLILGLILILGGEMIGRVLF) form a helical membrane-spanning segment. Over 272-284 (YGLHMTVGMAIAG) the chain is Periplasmic.

It belongs to the DmsC family. In terms of assembly, the complex consists of three subunits: YnfF, the reductase; YnfG, an electron transfer protein, and YnfH, a membrane anchor protein.

It localises to the cell inner membrane. Its function is as follows. Terminal reductase during anaerobic growth on various sulfoxide and N-oxide compounds. The C subunit anchors the other two subunits to the membrane and stabilize the catalytic subunits. This Escherichia coli (strain K12) protein is Anaerobic dimethyl sulfoxide reductase chain YnfH (ynfH).